We begin with the raw amino-acid sequence, 388 residues long: Chorismate synthase (388 aa).

Residues Arg39 and Arg45 each coordinate NADP(+). FMN contacts are provided by residues 130-132 (RSS), 251-252 (NA), Gly296, 311-315 (KPIPT), and Arg337.

Belongs to the chorismate synthase family. Homotetramer. Requires FMNH2 as cofactor.

It catalyses the reaction 5-O-(1-carboxyvinyl)-3-phosphoshikimate = chorismate + phosphate. The protein operates within metabolic intermediate biosynthesis; chorismate biosynthesis; chorismate from D-erythrose 4-phosphate and phosphoenolpyruvate: step 7/7. Its function is as follows. Catalyzes the anti-1,4-elimination of the C-3 phosphate and the C-6 proR hydrogen from 5-enolpyruvylshikimate-3-phosphate (EPSP) to yield chorismate, which is the branch point compound that serves as the starting substrate for the three terminal pathways of aromatic amino acid biosynthesis. This reaction introduces a second double bond into the aromatic ring system. In Streptococcus pyogenes serotype M28 (strain MGAS6180), this protein is Chorismate synthase.